Consider the following 546-residue polypeptide: CTP synthase (546 aa).

The amidoligase domain stretch occupies residues 1–266 (MTTNYIFVTG…DELVCKRFGI (266 aa)). A CTP-binding site is contributed by serine 14. Serine 14 contacts UTP. ATP is bound by residues 15–20 (SLGKGI) and aspartate 72. Positions 72 and 140 each coordinate Mg(2+). CTP is bound by residues 147 to 149 (DIE), 187 to 192 (KTKPTQ), and lysine 223. UTP contacts are provided by residues 187 to 192 (KTKPTQ) and lysine 223. 239–241 (RDV) provides a ligand contact to ATP. One can recognise a Glutamine amidotransferase type-1 domain in the interval 291–542 (TIGMVGKYIE…VKAAGEFQRG (252 aa)). Glycine 352 serves as a coordination point for L-glutamine. The active-site Nucleophile; for glutamine hydrolysis is the cysteine 379. L-glutamine is bound by residues 380–383 (LGMQ), glutamate 403, and arginine 470. Residues histidine 515 and glutamate 517 contribute to the active site.

Belongs to the CTP synthase family. As to quaternary structure, homotetramer.

It carries out the reaction UTP + L-glutamine + ATP + H2O = CTP + L-glutamate + ADP + phosphate + 2 H(+). The catalysed reaction is L-glutamine + H2O = L-glutamate + NH4(+). The enzyme catalyses UTP + NH4(+) + ATP = CTP + ADP + phosphate + 2 H(+). It participates in pyrimidine metabolism; CTP biosynthesis via de novo pathway; CTP from UDP: step 2/2. With respect to regulation, allosterically activated by GTP, when glutamine is the substrate; GTP has no effect on the reaction when ammonia is the substrate. The allosteric effector GTP functions by stabilizing the protein conformation that binds the tetrahedral intermediate(s) formed during glutamine hydrolysis. Inhibited by the product CTP, via allosteric rather than competitive inhibition. In terms of biological role, catalyzes the ATP-dependent amination of UTP to CTP with either L-glutamine or ammonia as the source of nitrogen. Regulates intracellular CTP levels through interactions with the four ribonucleotide triphosphates. This is CTP synthase from Vibrio atlanticus (strain LGP32) (Vibrio splendidus (strain Mel32)).